The chain runs to 212 residues: Thymidylate kinase (212 aa).

An ATP-binding site is contributed by 10–17 (GLEGAGKT).

The protein belongs to the thymidylate kinase family.

The catalysed reaction is dTMP + ATP = dTDP + ADP. Its function is as follows. Phosphorylation of dTMP to form dTDP in both de novo and salvage pathways of dTTP synthesis. This chain is Thymidylate kinase, found in Yersinia pseudotuberculosis serotype O:3 (strain YPIII).